The chain runs to 509 residues: 3-isopropylmalate dehydratase large subunit, chloroplastic (509 aa).

A compositionally biased stretch (low complexity) spans 1–24 (MASVISSSPFLCKSSSKSDLGISS). The interval 1–25 (MASVISSSPFLCKSSSKSDLGISSF) is disordered. The N-terminal 47 residues, 1–47 (MASVISSSPFLCKSSSKSDLGISSFPKSSQISIHRCQKKSISRKIVS), are a transit peptide targeting the chloroplast. Positions 376, 445, and 448 each coordinate [4Fe-4S] cluster.

It belongs to the aconitase/IPM isomerase family. Heterodimer of the large LEUC/IIL1 subunit and the small LEUD (SSU1, SSU2 or SSU3) subunits. Requires [4Fe-4S] cluster as cofactor. As to expression, expressed in roots, leaves, stems and flowers. Expressed at low levels in siliques.

Its subcellular location is the plastid. It is found in the chloroplast stroma. It catalyses the reaction (2R,3S)-3-isopropylmalate = (2S)-2-isopropylmalate. The catalysed reaction is a 2-(omega-methylsulfanyl)alkylmalate = a 2-(omega-methylsulfanyl)alkylmaleate + H2O. It carries out the reaction 2-(3-methylsulfanyl)propylmalate = 2-(2-methylsulfanyl)propylmaleate + H2O. The enzyme catalyses a 3-(omega-methylsulfanyl)alkylmalate = a 2-(omega-methylsulfanyl)alkylmaleate + H2O. It catalyses the reaction 2-(2-methylsulfanyl)ethylmalate = 2-(2-methylsulfanyl)ethylmaleate + H2O. The catalysed reaction is 3-(2-methylsulfanyl)ethylmalate = 2-(2-methylsulfanyl)ethylmaleate + H2O. It carries out the reaction 3-(3-methylsulfanyl)propylmalate = 2-(2-methylsulfanyl)propylmaleate + H2O. The protein operates within amino-acid biosynthesis; L-leucine biosynthesis; L-leucine from 3-methyl-2-oxobutanoate: step 2/4. Its function is as follows. Catalyzes the isomerization between 2-isopropylmalate and 3-isopropylmalate, via the formation of 2-isopropylmaleate. Functions in both the biosynthesis of leucine and in the methionine chain elongation pathway of aliphatic glucosinolate formation. The sequence is that of 3-isopropylmalate dehydratase large subunit, chloroplastic from Arabidopsis thaliana (Mouse-ear cress).